A 266-amino-acid polypeptide reads, in one-letter code: Beta-lactamase OXA-10 (266 aa).

The first 19 residues, 1 to 19 (MKTFAAYVIIACLSSTALA), serve as a signal peptide directing secretion. An intrachain disulfide couples cysteine 44 to cysteine 51. Residue serine 67 is the Acyl-ester intermediate of the active site. Lysine 70 is modified (N6-carboxylysine). Residues serine 115, threonine 206, phenylalanine 208, and arginine 250 each coordinate a beta-lactam.

The protein belongs to the class-D beta-lactamase family. Dimer.

Its subcellular location is the periplasm. It carries out the reaction a beta-lactam + H2O = a substituted beta-amino acid. Activated, with respect to most beta-lactam substrates, in the presence of 0.05 M sodium bicarbonate. In terms of biological role, class D beta-lactamase which confers resistance to the beta-lactam antibiotics, including penicillin, carbenicillin and oxacillin, and also some cephalosporins. Confers weak resistance to some carbapenems, in E.coli strain C600Z1. Acts via hydrolysis of the beta-lactam ring. Has penicillin- and cephalosporin-hydrolyzing activities. The protein is Beta-lactamase OXA-10 of Pseudomonas aeruginosa.